Here is a 210-residue protein sequence, read N- to C-terminus: V-type ATP synthase subunit D (210 aa).

It belongs to the V-ATPase D subunit family.

Functionally, produces ATP from ADP in the presence of a proton gradient across the membrane. The protein is V-type ATP synthase subunit D of Coprothermobacter proteolyticus (strain ATCC 35245 / DSM 5265 / OCM 4 / BT).